The following is a 256-amino-acid chain: uncharacterized protein (256 aa).

2 helical membrane passes run 181–201 (CCII…ASMV) and 231–251 (GIAV…GLIA).

The protein resides in the cell membrane. This is an uncharacterized protein from Methanocaldococcus jannaschii (strain ATCC 43067 / DSM 2661 / JAL-1 / JCM 10045 / NBRC 100440) (Methanococcus jannaschii).